Here is a 646-residue protein sequence, read N- to C-terminus: MGCCGCGSEEGSVRQWKPLEQRSCTDVLWLLIFVLFCIGMAIICGFAIASGAAQRLVFGYDSYGNICGHKNTEIKDVTMSGLDHTDKKYVFFFEPCNWDMVHLKILSVALCVTKCPDMDLKTLEDVRNFAKYNGSRLCLYNLDPTQYTSKNSKSCPILPVKSSKPIPFFHRCVPMDSGCKINFKALTTFVSYNSVLQRVITGVMTSKEIIVGLCLMSLVLSILLMVIIRYISKVLVWILAILTIIGSIGGTAVLWWLYADHKKTLKLDPSQGDVAADNVTALLVCAIIATVITVILLLLMLIMRKRVALTIALFHVAGKVFIHIPFLIFQSLWTFLALAFFWIYWIAVLLLLATAGYPQKKDQGYVEFKVSGPLQYTWIYHLVGLIWISEFILACQQMTIAGAVVTYYFTRDKHNLPATPILASMCRLIKYHLGTVAKGSFIITLIKIPQMILVYIHSQLKGKENACAKCMLKACMCCLWCLEKCLLYLNRNAYIATSINGTSFCTSAKDAIVILVENAMRVAAINTVGDFVLFLGKLLIVLVTGFVGIILLNYQRDYTVWVLPLIIICLFAFFVSHCFLSIYEMVVDVLFLCFAVDCKHNDGSPGREYYMDKSLMEFMDESRKAMRSVTGSGAEMKSMASGSDNA.

Residues 1–27 (MGCCGCGSEEGSVRQWKPLEQRSCTDV) lie on the Cytoplasmic side of the membrane. The chain crosses the membrane as a helical span at residues 28–48 (LWLLIFVLFCIGMAIICGFAI). The Extracellular segment spans residues 49-207 (ASGAAQRLVF…RVITGVMTSK (159 aa)). Asn133 carries an N-linked (GlcNAc...) asparagine glycan. A helical transmembrane segment spans residues 208 to 228 (EIIVGLCLMSLVLSILLMVII). Residues 229–233 (RYISK) lie on the Cytoplasmic side of the membrane. Residues 234 to 254 (VLVWILAILTIIGSIGGTAVL) traverse the membrane as a helical segment. Residues 255-281 (WWLYADHKKTLKLDPSQGDVAADNVTA) are Extracellular-facing. Residue Asn278 is glycosylated (N-linked (GlcNAc...) asparagine). Residues 282–302 (LLVCAIIATVITVILLLLMLI) form a helical membrane-spanning segment. Residues 303-308 (MRKRVA) lie on the Cytoplasmic side of the membrane. Residues 309 to 329 (LTIALFHVAGKVFIHIPFLIF) form a helical membrane-spanning segment. At 330-331 (QS) the chain is on the extracellular side. Residues 332-352 (LWTFLALAFFWIYWIAVLLLL) form a helical membrane-spanning segment. At 353–373 (ATAGYPQKKDQGYVEFKVSGP) the chain is on the cytoplasmic side. A helical membrane pass occupies residues 374–394 (LQYTWIYHLVGLIWISEFILA). Over 395–435 (CQQMTIAGAVVTYYFTRDKHNLPATPILASMCRLIKYHLGT) the chain is Extracellular. Residues 436 to 456 (VAKGSFIITLIKIPQMILVYI) form a helical membrane-spanning segment. Topologically, residues 457–530 (HSQLKGKENA…RVAAINTVGD (74 aa)) are cytoplasmic. The chain crosses the membrane as a helical span at residues 531 to 551 (FVLFLGKLLIVLVTGFVGIIL). The Extracellular portion of the chain corresponds to 552 to 559 (LNYQRDYT). A helical membrane pass occupies residues 560–580 (VWVLPLIIICLFAFFVSHCFL). The Cytoplasmic portion of the chain corresponds to 581-646 (SIYEMVVDVL…KSMASGSDNA (66 aa)).

The protein belongs to the CTL (choline transporter-like) family. As to expression, present in myelinated structures from brain and spinal cord (at protein level).

It localises to the cell membrane. The protein localises to the mitochondrion outer membrane. The catalysed reaction is choline(out) + n H(+)(in) = choline(in) + n H(+)(out). It catalyses the reaction ethanolamine(out) + n H(+)(in) = ethanolamine(in) + n H(+)(out). Functionally, probable choline transporter. May be involved in membrane synthesis and myelin production. In Torpedo marmorata (Marbled electric ray), this protein is Choline transporter-like protein 1 (slc44a1).